The chain runs to 493 residues: Trichothecene 8-O-acetyltransferase (493 aa).

Positions 180–191 (QDQNENEVQQPK) are enriched in polar residues. Residues 180 to 199 (QDQNENEVQQPKNLPDPDEP) are disordered.

It participates in sesquiterpene biosynthesis; trichothecene biosynthesis. Its function is as follows. Trichothecene 8-O-acetyltransferase; part of 2-gene cluster involved in trichothecene C-8 modification that mediates the biosynthesis of T2-toxin. The biosynthesis of trichothecenes begins with the cyclization of farnesyl diphosphate to trichodiene and is catalyzed by the trichodiene synthase TRI5. Trichodiene undergoes a series of oxygenations catalyzed by the cytochrome P450 monooxygenase TRI4. TRI4 controls the addition of four oxygens at C-2, C-3, C-11, and the C-12, C-13-epoxide to form the intermediate isotrichotriol. Isotrichotriol then undergoes a non-enzymatic isomerization and cyclization to form isotrichodermol. During this process, the oxygen at the C-2 position becomes the pyran ring oxygen and the hydroxyl group at C-11 is lost. More complex type A trichothecenes are built by modifying isotrichodermol through a series of paired hydroxylation and acetylation or acylation steps. Isotrichodermol is converted to isotrichodermin by the acetyltransferase TRI101. TRI101 encodes a C-3 transacetylase that acts as a self-protection or resistance factor during biosynthesis and that the presence of a free C-3 hydroxyl group is a key component of Fusarium trichothecene phytotoxicity. A second hydroxyl group is added to C-15 by the trichothecene C-15 hydroxylase TRI11, producing 15-decalonectrin, which is then acetylated by TRI3, producing calonectrin. A third hydroxyl group is added at C-4 by the cytochrome P450 monooxygenase TRI13, converting calonectrin to 3,15-diacetoxyspirpenol, which is subsequently acetylated bythe acetyltransferase TRI7. A fourth hydroxyl group is added to C-8 by the cytochrome P450 monooxygenase TRI1, followed by the addition of an isovaleryl moiety by TRI16. Finally, the acetyl group is removed from the C-3 position by the trichothecene C-3 esterase TRI8 to produce T-2 toxin. In Fusarium sporotrichioides, this protein is Trichothecene 8-O-acetyltransferase.